Reading from the N-terminus, the 549-residue chain is Chaperonin GroEL 2 (549 aa).

ATP contacts are provided by residues 29–32 (TLGP), K50, 86–90 (DGTTT), G414, 477–479 (NAA), and D493.

Belongs to the chaperonin (HSP60) family. As to quaternary structure, forms a cylinder of 14 subunits composed of two heptameric rings stacked back-to-back. Interacts with the co-chaperonin GroES.

The protein localises to the cytoplasm. It carries out the reaction ATP + H2O + a folded polypeptide = ADP + phosphate + an unfolded polypeptide.. In terms of biological role, together with its co-chaperonin GroES, plays an essential role in assisting protein folding. The GroEL-GroES system forms a nano-cage that allows encapsulation of the non-native substrate proteins and provides a physical environment optimized to promote and accelerate protein folding. The chain is Chaperonin GroEL 2 from Myxococcus xanthus (strain DK1622).